A 227-amino-acid chain; its full sequence is Translation initiation factor 6 (227 aa).

It belongs to the eIF-6 family.

Its function is as follows. Binds to the 50S ribosomal subunit and prevents its association with the 30S ribosomal subunit to form the 70S initiation complex. The chain is Translation initiation factor 6 from Pyrococcus horikoshii (strain ATCC 700860 / DSM 12428 / JCM 9974 / NBRC 100139 / OT-3).